Reading from the N-terminus, the 347-residue chain is Chaperone protein DnaJ 1 (347 aa).

One can recognise a J domain in the interval 5–75; the sequence is DPHSLLGLSP…PAAAPHDAQA (71 aa). Low complexity predominate over residues 68–77; that stretch reads AAPHDAQAAD. The disordered stretch occupies residues 68-91; the sequence is AAPHDAQAADARPEPPPEAPPRGA. A CR-type zinc finger spans residues 107-181; sequence GGEKAFTIAD…CHGSGQARAA (75 aa). C120, C123, C137, C140, C155, C158, C169, and C172 together coordinate Zn(2+). CXXCXGXG motif repeat units lie at residues 120-127, 137-144, 155-162, and 169-176; these read CGACGGSG, CATCHGSG, CADCAGRG, and CGACHGSG.

The protein belongs to the DnaJ family. As to quaternary structure, homodimer. The cofactor is Zn(2+).

It is found in the cytoplasm. Its function is as follows. Participates actively in the response to hyperosmotic and heat shock by preventing the aggregation of stress-denatured proteins and by disaggregating proteins, also in an autonomous, DnaK-independent fashion. Unfolded proteins bind initially to DnaJ; upon interaction with the DnaJ-bound protein, DnaK hydrolyzes its bound ATP, resulting in the formation of a stable complex. GrpE releases ADP from DnaK; ATP binding to DnaK triggers the release of the substrate protein, thus completing the reaction cycle. Several rounds of ATP-dependent interactions between DnaJ, DnaK and GrpE are required for fully efficient folding. Also involved, together with DnaK and GrpE, in the DNA replication of plasmids through activation of initiation proteins. This Aromatoleum aromaticum (strain DSM 19018 / LMG 30748 / EbN1) (Azoarcus sp. (strain EbN1)) protein is Chaperone protein DnaJ 1.